The sequence spans 85 residues: Large ribosomal subunit protein bL27 (85 aa).

It belongs to the bacterial ribosomal protein bL27 family.

The sequence is that of Large ribosomal subunit protein bL27 from Campylobacter curvus (strain 525.92).